The chain runs to 369 residues: MTTMTVPPSLLPLEPFPTAPDTRASTPHIRLHGLGKRYPGGVQALREIDLEIRRGEVFGIIGRSGAGKSSLIRTLNRLERPSEGQVLIDGEDIGGYDGQRLVALRRRIGMIFQHFNLMSAKTVRQNIALPLRVAGVPRARIEERVAGLLQLVGLEEKRDAYPAQLSGGQKQRVGIARALVHQPQILLCDEATSALDPESTQAILALLRDINRRLGLTIVLITHEMAVIREICDRVVVLECGRIVEQGEVWEVFGDPRHAVTRSLLGSLRAALPADLQARLRQAPGGGDPVLLDLQYTGASRRVPDLLAIARAIGQRVDLLHGGIERIQGRALGRLLLQVGAPPGELPGVLAKAALVADKVEVLGHVAHA.

Positions 1–26 are disordered; it reads MTTMTVPPSLLPLEPFPTAPDTRAST. The ABC transporter domain occupies 29-265; it reads IRLHGLGKRY…PRHAVTRSLL (237 aa). 62-69 is an ATP binding site; it reads GRSGAGKS.

This sequence belongs to the ABC transporter superfamily. Methionine importer (TC 3.A.1.24) family. As to quaternary structure, the complex is composed of two ATP-binding proteins (MetN), two transmembrane proteins (MetI) and a solute-binding protein (MetQ).

It is found in the cell inner membrane. It catalyses the reaction L-methionine(out) + ATP + H2O = L-methionine(in) + ADP + phosphate + H(+). It carries out the reaction D-methionine(out) + ATP + H2O = D-methionine(in) + ADP + phosphate + H(+). Its function is as follows. Part of the ABC transporter complex MetNIQ involved in methionine import. Responsible for energy coupling to the transport system. This chain is Methionine import ATP-binding protein MetN 1, found in Pseudomonas aeruginosa (strain UCBPP-PA14).